The primary structure comprises 266 residues: Interleukin-1 beta (266 aa).

A propeptide spanning residues 1–113 is cleaved from the precursor; sequence MATVPEPINE…ETSSDELLCD (113 aa).

It belongs to the IL-1 family. In terms of assembly, monomer. In its precursor form, weakly interacts with full-length MEFV; the mature cytokine does not interact at all. Interacts with integrins ITGAV:ITGBV and ITGA5:ITGB1; integrin-binding is required for IL1B signaling. Interacts with cargo receptor TMED10; the interaction is direct and is required for the secretion of IL1B mature form. Interacts with HSP90AB1; the interaction facilitates cargo translocation into the ERGIC. Interacts with HSP90B1; the interaction facilitates cargo translocation into the ERGIC.

Its subcellular location is the cytoplasm. It localises to the cytosol. The protein resides in the secreted. The protein localises to the lysosome. It is found in the extracellular exosome. Its function is as follows. Potent pro-inflammatory cytokine. Initially discovered as the major endogenous pyrogen, induces prostaglandin synthesis, neutrophil influx and activation, T-cell activation and cytokine production, B-cell activation and antibody production, and fibroblast proliferation and collagen production. Promotes Th17 differentiation of T-cells. Synergizes with IL12/interleukin-12 to induce IFNG synthesis from T-helper 1 (Th1) cells. Plays a role in angiogenesis by inducing VEGF production synergistically with TNF and IL6. Involved in transduction of inflammation downstream of pyroptosis: its mature form is specifically released in the extracellular milieu by passing through the gasdermin-D (GSDMD) pore. The chain is Interleukin-1 beta (IL1B) from Capra hircus (Goat).